The following is a 131-amino-acid chain: Large ribosomal subunit protein bL17 (131 aa).

It belongs to the bacterial ribosomal protein bL17 family. As to quaternary structure, part of the 50S ribosomal subunit. Contacts protein L32.

This is Large ribosomal subunit protein bL17 from Oenococcus oeni (strain ATCC BAA-331 / PSU-1).